Reading from the N-terminus, the 160-residue chain is Putative 4-hydroxy-4-methyl-2-oxoglutarate aldolase (160 aa).

Substrate contacts are provided by residues 78-81 and Arg100; that span reads GDVI. Residue Asp101 coordinates a divalent metal cation.

This sequence belongs to the class II aldolase/RraA-like family. In terms of assembly, homotrimer. The cofactor is a divalent metal cation.

It carries out the reaction 4-hydroxy-4-methyl-2-oxoglutarate = 2 pyruvate. The enzyme catalyses oxaloacetate + H(+) = pyruvate + CO2. Catalyzes the aldol cleavage of 4-hydroxy-4-methyl-2-oxoglutarate (HMG) into 2 molecules of pyruvate. Also contains a secondary oxaloacetate (OAA) decarboxylase activity due to the common pyruvate enolate transition state formed following C-C bond cleavage in the retro-aldol and decarboxylation reactions. The chain is Putative 4-hydroxy-4-methyl-2-oxoglutarate aldolase from Mycolicibacterium vanbaalenii (strain DSM 7251 / JCM 13017 / BCRC 16820 / KCTC 9966 / NRRL B-24157 / PYR-1) (Mycobacterium vanbaalenii).